The primary structure comprises 95 residues: Aspartyl/glutamyl-tRNA(Asn/Gln) amidotransferase subunit C (95 aa).

The protein belongs to the GatC family. In terms of assembly, heterotrimer of A, B and C subunits.

It carries out the reaction L-glutamyl-tRNA(Gln) + L-glutamine + ATP + H2O = L-glutaminyl-tRNA(Gln) + L-glutamate + ADP + phosphate + H(+). The catalysed reaction is L-aspartyl-tRNA(Asn) + L-glutamine + ATP + H2O = L-asparaginyl-tRNA(Asn) + L-glutamate + ADP + phosphate + 2 H(+). Its function is as follows. Allows the formation of correctly charged Asn-tRNA(Asn) or Gln-tRNA(Gln) through the transamidation of misacylated Asp-tRNA(Asn) or Glu-tRNA(Gln) in organisms which lack either or both of asparaginyl-tRNA or glutaminyl-tRNA synthetases. The reaction takes place in the presence of glutamine and ATP through an activated phospho-Asp-tRNA(Asn) or phospho-Glu-tRNA(Gln). This is Aspartyl/glutamyl-tRNA(Asn/Gln) amidotransferase subunit C from Methylobacterium nodulans (strain LMG 21967 / CNCM I-2342 / ORS 2060).